The primary structure comprises 247 residues: Small ribosomal subunit protein uS3 (247 aa).

The region spanning 39–107 (VRDYLRKKLD…PAQVNIEEIT (69 aa)) is the KH type-2 domain. The interval 213–247 (SVYNPPKEDKTRAPKRRGRSNSNRRNSDRANTDRG) is disordered. Positions 237–247 (RNSDRANTDRG) are enriched in basic and acidic residues.

Belongs to the universal ribosomal protein uS3 family. In terms of assembly, part of the 30S ribosomal subunit. Forms a tight complex with proteins S10 and S14.

Its function is as follows. Binds the lower part of the 30S subunit head. Binds mRNA in the 70S ribosome, positioning it for translation. The polypeptide is Small ribosomal subunit protein uS3 (Psychrobacter sp. (strain PRwf-1)).